A 62-amino-acid polypeptide reads, in one-letter code: Large ribosomal subunit protein bL32 (62 aa).

The disordered stretch occupies residues 28 to 62; sequence SIEPTTGEVHRRHHISPDGFYRGRQVIKAKEQDEE.

This sequence belongs to the bacterial ribosomal protein bL32 family.

The protein is Large ribosomal subunit protein bL32 of Thioalkalivibrio sulfidiphilus (strain HL-EbGR7).